Here is a 3387-residue protein sequence, read N- to C-terminus: Genome polyprotein (3387 aa).

Topologically, residues 1–100 (MNQRKKVARP…LNILNGRKRS (100 aa)) are cytoplasmic. Positions 36–71 (LFSGKGPLRMVLAFITFLRVLSIPPTAGILKRWGQL) are hydrophobic; homodimerization of capsid protein C. Residues 100-113 (STITLLCLIPTVMA) constitute a propeptide, ER anchor for the capsid protein C, removed in mature form by serine protease NS3. Residues 101 to 117 (TITLLCLIPTVMAFHLS) traverse the membrane as a helical segment. The Extracellular portion of the chain corresponds to 118–237 (TRDGEPLMIV…GAWKHAQRVE (120 aa)). N-linked (GlcNAc...) asparagine; by host glycosylation occurs at Asn-182. A helical membrane pass occupies residues 238–258 (SWILRNPGFALLAGFMAYMIG). Residues 259–265 (QTGIQRT) are Cytoplasmic-facing. Residues 266-279 (VFFILMMLVAPSYG) form a helical membrane-spanning segment. At 280–725 (MRCVGVGNRD…HQVFGSVYTT (446 aa)) the chain is on the extracellular side. Disulfide bonds link Cys-282-Cys-309, Cys-339-Cys-400, Cys-353-Cys-384, and Cys-371-Cys-395. Asn-346 carries an N-linked (GlcNAc...) asparagine; by host glycan. The segment at 377–390 (DRGWGNGCGLFGKG) is fusion peptide. Asn-432 is a glycosylation site (N-linked (GlcNAc...) asparagine; by host). Disulfide bonds link Cys-464–Cys-564 and Cys-581–Cys-612. Residues 726–746 (MFGGVSWMVRILIGLLVLWIG) form a helical membrane-spanning segment. At 747–753 (TNSRNTS) the chain is on the cytoplasmic side. Residues 754–774 (MAMSCIAVGGITLFLGFTVHA) traverse the membrane as a helical segment. Topologically, residues 775–1194 (DMGCAVSWSG…MLGDTMSGRM (420 aa)) are extracellular. Disulfide bonds link Cys-778-Cys-789, Cys-829-Cys-917, Cys-953-Cys-997, Cys-1054-Cys-1103, Cys-1065-Cys-1087, and Cys-1086-Cys-1090. N-linked (GlcNAc...) asparagine; by host glycosylation is found at Asn-904 and Asn-981. The helical transmembrane segment at 1195 to 1218 (GGQIHLAIMAVFKMSPGYVLGIFL) threads the bilayer. Residues 1219–1224 (RKLTSR) are Lumenal-facing. The chain crosses the membrane as a helical span at residues 1225 to 1243 (ETALMVIGMAMTTVLSIPH). Topologically, residues 1244 to 1267 (DLMEFIDGISLGLILLKMVTHFDN) are cytoplasmic. A helical transmembrane segment spans residues 1268-1288 (TQVGTLALSLTFIKSTMPLVM). Ala-1289 is a topological domain (lumenal). The chain crosses the membrane as a helical span at residues 1290–1308 (WRTIMAVLFVVTLIPLCRT). The Lumenal segment spans residues 1309-1316 (SCLQKQSH). The helical transmembrane segment at 1317–1337 (WVEITALILGAQALPVYLMTL) threads the bilayer. At 1338 to 1345 (MKGASKRS) the chain is on the cytoplasmic side. The chain crosses the membrane as a helical span at residues 1346–1366 (WPLNEGIMAVGLVSLLGSALL). Residues 1367–1369 (KND) are Lumenal-facing. The helical transmembrane segment at 1370-1390 (VPLAGPMVAGGLLLAAYVMSG) threads the bilayer. Over 1391–1437 (SSADLSLEKAANVQWDEMADITGSSPIIEVKQDEDGSFSIRDVEETN) the chain is Cytoplasmic. The interacts with and activates NS3 protease stretch occupies residues 1397-1436 (LEKAANVQWDEMADITGSSPIIEVKQDEDGSFSIRDVEET). An intramembrane region (helical) is located at residues 1438–1458 (MITLLVKLALITVSGLYPLAI). At 1459–2143 (PVTMTLWYMW…QHALNELPES (685 aa)) the chain is on the cytoplasmic side. The 178-residue stretch at 1475-1652 (SGALWDVPSP…ERIGEPDYEV (178 aa)) folds into the Peptidase S7 domain. Residues His-1525, Asp-1549, and Ser-1609 each act as charge relay system; for serine protease NS3 activity in the active site. Residues 1654-1810 (EDIFRKKRLT…QSNSPIEDIE (157 aa)) form the Helicase ATP-binding domain. An important for RNA-binding region spans residues 1658–1661 (RKKR). 1667–1674 (LHPGAGKT) lines the ATP pocket. Residues 1758-1761 (DEAH) carry the DEAH box motif. A Helicase C-terminal domain is found at 1820 to 1987 (TGFDWITDYQ…IIPTLFGPER (168 aa)). Residue Lys-1862 is modified to N6-acetyllysine; by host. Residues 2144 to 2164 (LETLMLVALLGAMTAGIFLFF) form a helical membrane-spanning segment. The Lumenal portion of the chain corresponds to 2165-2169 (MQGKG). The segment at residues 2170–2190 (IGKLSMGLIAIAVASGLLWVA) is an intramembrane region (helical). Position 2191 (Glu-2191) is a topological domain, lumenal. A helical transmembrane segment spans residues 2192–2212 (IQPQWIAASIILEFFLMVLLV). The Cytoplasmic segment spans residues 2213-2225 (PEPEKQRTPQDNQ). A helical transmembrane segment spans residues 2226–2246 (LIYVILTILTIIALVAANEMG). Residues 2247–2270 (LIEKTKTDFGFYQAKTETTILDVD) are Lumenal-facing. An intramembrane region (helical) is located at residues 2271 to 2291 (LRPASAWTLYAVATTILTPML). The Lumenal portion of the chain corresponds to 2292-2301 (RHTIENTSAN). 2 N-linked (GlcNAc...) asparagine; by host glycosylation sites follow: Asn-2297 and Asn-2301. Residues 2302–2322 (LSLAAIANQAAVLMGLGKGWP) constitute an intramembrane region (helical). Residues 2323–2343 (LHRMDLGVPLLAMGCYSQVNP) are Lumenal-facing. Residues 2344–2364 (TTLTASLVMLLVHYAIIGPGL) form a helical membrane-spanning segment. Topologically, residues 2365–2409 (QAKATREAQKRTAAGIMKNPTVDGITVIDLEPISYDPKFEKQLGQ) are cytoplasmic. A helical membrane pass occupies residues 2410–2430 (VMLLVLCAGQLLLMRTTWAFC). Residues 2431–2455 (EVLTLATGPILTLWEGNPGRFWNTT) lie on the Lumenal side of the membrane. A glycan (N-linked (GlcNAc...) asparagine; by host) is linked at Asn-2453. Residues 2456–2476 (IAVSTANIFRGSYLAGAGLAF) traverse the membrane as a helical segment. Residues 2477 to 3387 (SLIKNAQTPR…SAHFESEGVL (911 aa)) lie on the Cytoplasmic side of the membrane. Residues 2489–2751 (TGTTGETLGE…DADLGAGTRS (263 aa)) form the mRNA cap 0-1 NS5-type MT domain. Ser-2543 serves as a coordination point for S-adenosyl-L-methionine. The residue at position 2543 (Ser-2543) is a Phosphoserine. The For 2'-O-MTase activity role is filled by Lys-2548. Residues 2564-2567 (VVDL) carry the SUMO-interacting motif motif. The S-adenosyl-L-methionine site is built by Gly-2573, Trp-2574, Thr-2591, Lys-2592, Asp-2618, and Val-2619. The active-site For 2'-O-MTase activity is the Asp-2633. Ile-2634 is a binding site for S-adenosyl-L-methionine. Active-site for 2'-O-MTase activity residues include Lys-2668 and Glu-2704. Tyr-2706 is a binding site for S-adenosyl-L-methionine. The Zn(2+) site is built by Glu-2925, His-2929, Cys-2934, and Cys-2937. A RdRp catalytic domain is found at 3016–3166 (LIYADDTAGW…PLDERFSTSL (151 aa)). Residues His-3200, Cys-3216, and Cys-3335 each coordinate Zn(2+).

The protein in the N-terminal section; belongs to the class I-like SAM-binding methyltransferase superfamily. mRNA cap 0-1 NS5-type methyltransferase family. In terms of assembly, homodimer. Interacts (via N-terminus) with host EXOC1 (via C-terminus); this interaction results in EXOC1 degradation through the proteasome degradation pathway. As to quaternary structure, forms heterodimers with envelope protein E in the endoplasmic reticulum and Golgi. Homodimer; in the endoplasmic reticulum and Golgi. Interacts with protein prM. Interacts with non-structural protein 1. In terms of assembly, homodimer; Homohexamer when secreted. Interacts with envelope protein E. As to quaternary structure, interacts (via N-terminus) with serine protease NS3. Forms a heterodimer with serine protease NS3. May form homooligomers. In terms of assembly, forms a heterodimer with NS2B. Interacts with NS4B. Interacts with unphosphorylated RNA-directed RNA polymerase NS5; this interaction stimulates RNA-directed RNA polymerase NS5 guanylyltransferase activity. Interacts with host SHFL. As to quaternary structure, interacts with host MAVS; this interaction inhibits the synthesis of IFN-beta. Interacts with host SHFL. Interacts with host AUP1; the interaction occurs in the presence of Dengue virus NS4B and induces lipophagy which facilitates production of virus progeny particles. Interacts with serine protease NS3. In terms of assembly, homodimer. Interacts with host STAT2; this interaction inhibits the phosphorylation of the latter, and, when all viral proteins are present (polyprotein), targets STAT2 for degradation. Interacts with serine protease NS3. Interacts with host PAF1 complex; the interaction may prevent the recruitment of the PAF1 complex to interferon-responsive genes, and thus reduces the immune response. In terms of processing, specific enzymatic cleavages in vivo yield mature proteins. Cleavages in the lumen of endoplasmic reticulum are performed by host signal peptidase, whereas cleavages in the cytoplasmic side are performed by serine protease NS3. Signal cleavage at the 2K-4B site requires a prior NS3 protease-mediated cleavage at the 4A-2K site. Post-translationally, cleaved in post-Golgi vesicles by a host furin, releasing the mature small envelope protein M, and peptide pr. This cleavage is incomplete as up to 30% of viral particles still carry uncleaved prM. N-glycosylated. In terms of processing, N-glycosylated. The excreted form is glycosylated and this is required for efficient secretion of the protein from infected cells. Post-translationally, acetylated by host KAT5. Acetylation modulates NS3 RNA-binding and unwinding activities and plays an important positive role for viral replication. Sumoylation of RNA-directed RNA polymerase NS5 increases NS5 protein stability allowing proper viral RNA replication. In terms of processing, phosphorylated on serines residues. This phosphorylation may trigger NS5 nuclear localization.

Its subcellular location is the virion. It is found in the host nucleus. The protein resides in the host cytoplasm. The protein localises to the host perinuclear region. It localises to the secreted. Its subcellular location is the virion membrane. It is found in the host endoplasmic reticulum membrane. The protein resides in the host mitochondrion. It carries out the reaction Selective hydrolysis of -Xaa-Xaa-|-Yaa- bonds in which each of the Xaa can be either Arg or Lys and Yaa can be either Ser or Ala.. It catalyses the reaction RNA(n) + a ribonucleoside 5'-triphosphate = RNA(n+1) + diphosphate. The catalysed reaction is a ribonucleoside 5'-triphosphate + H2O = a ribonucleoside 5'-diphosphate + phosphate + H(+). The enzyme catalyses ATP + H2O = ADP + phosphate + H(+). It carries out the reaction a 5'-end (5'-triphosphoguanosine)-ribonucleoside in mRNA + S-adenosyl-L-methionine = a 5'-end (N(7)-methyl 5'-triphosphoguanosine)-ribonucleoside in mRNA + S-adenosyl-L-homocysteine. It catalyses the reaction a 5'-end (N(7)-methyl 5'-triphosphoguanosine)-ribonucleoside in mRNA + S-adenosyl-L-methionine = a 5'-end (N(7)-methyl 5'-triphosphoguanosine)-(2'-O-methyl-ribonucleoside) in mRNA + S-adenosyl-L-homocysteine + H(+). Functionally, plays a role in virus budding by binding to the cell membrane and gathering the viral RNA into a nucleocapsid that forms the core of a mature virus particle. During virus entry, may induce genome penetration into the host cytoplasm after hemifusion induced by the surface proteins. Can migrate to the cell nucleus where it modulates host functions. Overcomes the anti-viral effects of host EXOC1 by sequestering and degrading the latter through the proteasome degradation pathway. Its function is as follows. Inhibits RNA silencing by interfering with host Dicer. In terms of biological role, prevents premature fusion activity of envelope proteins in trans-Golgi by binding to envelope protein E at pH6.0. After virion release in extracellular space, gets dissociated from E dimers. Acts as a chaperone for envelope protein E during intracellular virion assembly by masking and inactivating envelope protein E fusion peptide. prM is the only viral peptide matured by host furin in the trans-Golgi network probably to avoid catastrophic activation of the viral fusion activity in acidic Golgi compartment prior to virion release. prM-E cleavage is inefficient, and many virions are only partially matured. These uncleaved prM would play a role in immune evasion. Functionally, may play a role in virus budding. Exerts cytotoxic effects by activating a mitochondrial apoptotic pathway through M ectodomain. May display a viroporin activity. Its function is as follows. Binds to host cell surface receptor and mediates fusion between viral and cellular membranes. Envelope protein is synthesized in the endoplasmic reticulum in the form of heterodimer with protein prM. They play a role in virion budding in the ER, and the newly formed immature particle is covered with 60 spikes composed of heterodimer between precursor prM and envelope protein E. The virion is transported to the Golgi apparatus where the low pH causes dissociation of PrM-E heterodimers and formation of E homodimers. prM-E cleavage is inefficient, and many virions are only partially matured. These uncleaved prM would play a role in immune evasion. In terms of biological role, involved in immune evasion, pathogenesis and viral replication. Once cleaved off the polyprotein, is targeted to three destinations: the viral replication cycle, the plasma membrane and the extracellular compartment. Essential for viral replication. Required for formation of the replication complex and recruitment of other non-structural proteins to the ER-derived membrane structures. Excreted as a hexameric lipoparticle that plays a role against host immune response. Antagonizing the complement function. Binds to the host macrophages and dendritic cells. Inhibits signal transduction originating from Toll-like receptor 3 (TLR3). Disrupts the host endothelial glycocalyx layer of host pulmonary microvascular endothelial cells, inducing degradation of sialic acid and shedding of heparan sulfate proteoglycans. NS1 induces expression of sialidases, heparanase, and activates cathepsin L, which activates heparanase via enzymatic cleavage. These effects are probably linked to the endothelial hyperpermeability observed in severe dengue disease. Functionally, component of the viral RNA replication complex that functions in virion assembly and antagonizes the host immune response. Its function is as follows. Required cofactor for the serine protease function of NS3. May have membrane-destabilizing activity and form viroporins. In terms of biological role, displays three enzymatic activities: serine protease, NTPase and RNA helicase. NS3 serine protease, in association with NS2B, performs its autocleavage and cleaves the polyprotein at dibasic sites in the cytoplasm: C-prM, NS2A-NS2B, NS2B-NS3, NS3-NS4A, NS4A-2K and NS4B-NS5. NS3 RNA helicase binds RNA and unwinds dsRNA in the 3' to 5' direction. Regulates the ATPase activity of the NS3 helicase activity. NS4A allows NS3 helicase to conserve energy during unwinding. Plays a role in the inhibition of the host innate immune response. Interacts with host MAVS and thereby prevents the interaction between RIGI and MAVS. In turn, IFN-beta production is impaired. Interacts with host AUP1 which mediates induction of lipophagy in host cells and facilitates production of virus progeny particles. Functionally, functions as a signal peptide for NS4B and is required for the interferon antagonism activity of the latter. Its function is as follows. Induces the formation of ER-derived membrane vesicles where the viral replication takes place. Inhibits interferon (IFN)-induced host STAT1 phosphorylation and nuclear translocation, thereby preventing the establishment of cellular antiviral state by blocking the IFN-alpha/beta pathway. In terms of biological role, replicates the viral (+) and (-) RNA genome, and performs the capping of genomes in the cytoplasm. NS5 methylates viral RNA cap at guanine N-7 and ribose 2'-O positions. Besides its role in RNA genome replication, also prevents the establishment of cellular antiviral state by blocking the interferon-alpha/beta (IFN-alpha/beta) signaling pathway. Inhibits host TYK2 and STAT2 phosphorylation, thereby preventing activation of JAK-STAT signaling pathway. May reduce immune responses by preventing the recruitment of the host PAF1 complex to interferon-responsive genes. The chain is Genome polyprotein from Dengue virus type 4 (strain Thailand/0348/1991) (DENV-4).